The primary structure comprises 93 residues: Small ribosomal subunit protein uS19 (93 aa).

Belongs to the universal ribosomal protein uS19 family.

Its function is as follows. Protein S19 forms a complex with S13 that binds strongly to the 16S ribosomal RNA. The sequence is that of Small ribosomal subunit protein uS19 from Ruminiclostridium cellulolyticum (strain ATCC 35319 / DSM 5812 / JCM 6584 / H10) (Clostridium cellulolyticum).